The chain runs to 238 residues: Sugar fermentation stimulation protein homolog (238 aa).

It belongs to the SfsA family.

This Vibrio vulnificus (strain YJ016) protein is Sugar fermentation stimulation protein homolog.